The following is a 428-amino-acid chain: Enolase (428 aa).

Residue Gln-163 coordinates (2R)-2-phosphoglycerate. The active-site Proton donor is Glu-205. Residues Asp-242, Glu-286, and Asp-313 each contribute to the Mg(2+) site. Positions 338, 367, 368, and 389 each coordinate (2R)-2-phosphoglycerate. Catalysis depends on Lys-338, which acts as the Proton acceptor.

It belongs to the enolase family. It depends on Mg(2+) as a cofactor.

Its subcellular location is the cytoplasm. It localises to the secreted. The protein resides in the cell surface. The enzyme catalyses (2R)-2-phosphoglycerate = phosphoenolpyruvate + H2O. The protein operates within carbohydrate degradation; glycolysis; pyruvate from D-glyceraldehyde 3-phosphate: step 4/5. In terms of biological role, catalyzes the reversible conversion of 2-phosphoglycerate (2-PG) into phosphoenolpyruvate (PEP). It is essential for the degradation of carbohydrates via glycolysis. In Lactobacillus acidophilus (strain ATCC 700396 / NCK56 / N2 / NCFM), this protein is Enolase.